Here is a 482-residue protein sequence, read N- to C-terminus: Ribulose bisphosphate carboxylase large chain (482 aa).

The propeptide occupies 1–2; that stretch reads MS. Residue proline 3 is modified to N-acetylproline. Lysine 14 carries the N6,N6,N6-trimethyllysine modification. Positions 123 and 173 each coordinate substrate. Lysine 175 serves as the catalytic Proton acceptor. Lysine 177 provides a ligand contact to substrate. Mg(2+) is bound by residues lysine 201, aspartate 203, and glutamate 204. Position 201 is an N6-carboxylysine (lysine 201). Histidine 294 functions as the Proton acceptor in the catalytic mechanism. Substrate-binding residues include arginine 295, histidine 327, and serine 379.

It belongs to the RuBisCO large chain family. Type I subfamily. In terms of assembly, heterohexadecamer of 8 large chains and 8 small chains; disulfide-linked. The disulfide link is formed within the large subunit homodimers. The cofactor is Mg(2+). Post-translationally, the disulfide bond which can form in the large chain dimeric partners within the hexadecamer appears to be associated with oxidative stress and protein turnover.

It is found in the plastid. Its subcellular location is the chloroplast. The catalysed reaction is 2 (2R)-3-phosphoglycerate + 2 H(+) = D-ribulose 1,5-bisphosphate + CO2 + H2O. It catalyses the reaction D-ribulose 1,5-bisphosphate + O2 = 2-phosphoglycolate + (2R)-3-phosphoglycerate + 2 H(+). Functionally, ruBisCO catalyzes two reactions: the carboxylation of D-ribulose 1,5-bisphosphate, the primary event in carbon dioxide fixation, as well as the oxidative fragmentation of the pentose substrate in the photorespiration process. Both reactions occur simultaneously and in competition at the same active site. The protein is Ribulose bisphosphate carboxylase large chain of Phytolacca americana (American pokeweed).